Consider the following 305-residue polypeptide: Mas-related G-protein coupled receptor member A7 (305 aa).

Topologically, residues 1–17 are extracellular; sequence MDETSPRSIDIESLIPN. The helical transmembrane segment at 18–38 threads the bilayer; the sequence is LMIIIFGLVGLTGNAIVLWLL. The Cytoplasmic portion of the chain corresponds to 39-46; sequence GFCLHRNA. A helical transmembrane segment spans residues 47–67; sequence FLVYILNLALADFLFLLCHFI. Residues 68–81 lie on the Extracellular side of the membrane; the sequence is NSAMFLLKVPIPNG. Residues 82 to 102 traverse the membrane as a helical segment; the sequence is IFVYCFYTIKMVLYITGLSML. Residues 103–129 are Cytoplasmic-facing; it reads SAISTERCLSVLCPIWYHCRRPEHTST. A helical transmembrane segment spans residues 130 to 150; that stretch reads VMCAVIWIFSVLICILKEYFC. Topologically, residues 151 to 167 are extracellular; sequence DFFGTKLGNYYVCQASN. Residues 168 to 188 form a helical membrane-spanning segment; sequence FFMGAYLMFLFVVLCLSTLAL. The Cytoplasmic portion of the chain corresponds to 189–211; the sequence is LARLFCGAEKMKFTRLFVTIMLT. A helical transmembrane segment spans residues 212 to 232; sequence ILVFLLCGLPWGFFWFLLIWI. Residues 233–244 are Extracellular-facing; it reads KGGFSVLDYRLY. A helical transmembrane segment spans residues 245 to 265; it reads LASIVLTVVNSCANPIIYFFV. Topologically, residues 266–305 are cytoplasmic; it reads GSFRHRLKHQTLKMVLQSALQDTPETHENMVEMSRIKAEQ.

Belongs to the G-protein coupled receptor 1 family. Mas subfamily. In terms of tissue distribution, expressed in a subset of sensory neurons that includes nociceptors. Expressed in the subclass of non-peptidergic sensory neurons that are IB4(+) and VR1(-).

It localises to the cell membrane. In terms of biological role, orphan receptor. May be a receptor for RFamide-family neuropeptides such as NPFF and NPAF, which are analgesic in vivo. May regulate nociceptor function and/or development, including the sensation or modulation of pain. This Mus musculus (Mouse) protein is Mas-related G-protein coupled receptor member A7 (Mrgpra7).